A 171-amino-acid polypeptide reads, in one-letter code: MTVPRVVLVGPMGVGKSTVGALVAERLGCAYRDTDDDIVTAEGRTIADIFVDEGEPVFRAIEKRAVHTALAEHDGVLALGGGAILDADTRALLAGHRVVYLSMEVDEAVKRTGLNAARPLLAVNPRRQWRELMEARRHLYTEVARAVVATDGRGPEEVAQAVLDALELKEA.

An ATP-binding site is contributed by 13–18 (GVGKST). S17 is a Mg(2+) binding site. 3 residues coordinate substrate: D35, R59, and G81. R118 provides a ligand contact to ATP. Residue R136 participates in substrate binding. Residue R153 participates in ATP binding.

This sequence belongs to the shikimate kinase family. As to quaternary structure, monomer. Requires Mg(2+) as cofactor.

It localises to the cytoplasm. It carries out the reaction shikimate + ATP = 3-phosphoshikimate + ADP + H(+). It functions in the pathway metabolic intermediate biosynthesis; chorismate biosynthesis; chorismate from D-erythrose 4-phosphate and phosphoenolpyruvate: step 5/7. Functionally, catalyzes the specific phosphorylation of the 3-hydroxyl group of shikimic acid using ATP as a cosubstrate. The polypeptide is Shikimate kinase (Streptomyces avermitilis (strain ATCC 31267 / DSM 46492 / JCM 5070 / NBRC 14893 / NCIMB 12804 / NRRL 8165 / MA-4680)).